The sequence spans 147 residues: DNA-directed RNA polymerase RPB6 homolog (147 aa).

The protein belongs to the archaeal RpoK/eukaryotic RPB6 RNA polymerase subunit family. In terms of assembly, part of the viral DNA-directed RNA polymerase that consists of 8 polII-like subunits (RPB1, RPB2, RPB3, RPB5, RPB6, RPB7, RPB9, RPB10), a capping enzyme and a termination factor.

It localises to the host cytoplasm. Its subcellular location is the virion. Component of the DNA-directed RNA polymerase (RNAP) that catalyzes the transcription in the cytoplasm of viral DNA into RNA using the four ribonucleoside triphosphates as substrates. This is DNA-directed RNA polymerase RPB6 homolog from Ornithodoros (relapsing fever ticks).